The chain runs to 92 residues: Alpha-elapitoxin-Lh2a (92 aa).

A signal peptide spans 1–21; it reads MKTLLLTLVVVTIVCLDLGDS. 5 cysteine pairs are disulfide-bonded: Cys-24–Cys-41, Cys-34–Cys-62, Cys-47–Cys-51, Cys-66–Cys-77, and Cys-78–Cys-83.

Belongs to the three-finger toxin family. Long-chain subfamily. Type II alpha-neurotoxin sub-subfamily. As to expression, expressed by the venom gland.

It is found in the secreted. Functionally, binds with high affinity to muscular (alpha-1/CHRNA1) and neuronal (alpha-7/CHRNA7) nicotinic acetylcholine receptor (nAChR) and inhibits acetylcholine from binding to the receptor, thereby impairing neuromuscular and neuronal transmission. The sequence is that of Alpha-elapitoxin-Lh2a from Hydrophis hardwickii (Hardwick's spine-bellied seasnake).